Reading from the N-terminus, the 378-residue chain is MITVSNTVENLERLSDEGVSIWLDDLSRKRITSGNLAELIAHKHVVGVTTNPSIFQAAIGSGEGYEEQLADLAVRGVTVDEAVRMMTTADVRAAADILRPVYDATGGRDGRVSIEVDPRLAHDTEATIAEAKQLAWLVDRPNVMIKIPATKAGLPAITEVIGLGISVNVTLIFSLERYREVMDAYLAGLERAQAAGIDLAGIHSVASFFVSRVDSEIDKRLAKAGTDDAQALKGKAALANARLAYEAYEEVFAGERWTALAPAGAHKQRPLWASTGVKDPAYKDTLYVDELVAPGTVNTMPEGTLNATADHGDIHGDTVTGGYAQARADLAAVERLGISYDEVVKQLEDEAVAKFEVAWGDLLEAVATSLRGKGADGE.

K146 acts as the Schiff-base intermediate with substrate in catalysis.

This sequence belongs to the transaldolase family. Type 2 subfamily.

It localises to the cytoplasm. The catalysed reaction is D-sedoheptulose 7-phosphate + D-glyceraldehyde 3-phosphate = D-erythrose 4-phosphate + beta-D-fructose 6-phosphate. It participates in carbohydrate degradation; pentose phosphate pathway; D-glyceraldehyde 3-phosphate and beta-D-fructose 6-phosphate from D-ribose 5-phosphate and D-xylulose 5-phosphate (non-oxidative stage): step 2/3. Transaldolase is important for the balance of metabolites in the pentose-phosphate pathway. The protein is Transaldolase 1 of Streptomyces avermitilis (strain ATCC 31267 / DSM 46492 / JCM 5070 / NBRC 14893 / NCIMB 12804 / NRRL 8165 / MA-4680).